The following is a 147-amino-acid chain: uncharacterized protein (147 aa).

The 59-residue stretch at 1 to 59 (MGAELVKWVKSHKIDAHIITFVAKMPYIDSIKLLEAGAKGCVWKTSHPAKLNRAIDSIS) folds into the Response regulatory domain. An HTH luxR-type domain is found at 78 to 143 (RYSSDNQLTN…ELIKTALRMG (66 aa)). The H-T-H motif DNA-binding region spans 102–121 (NKEIANFLQLSRKTVETHRL).

Post-translationally, overexpressed protein is phosphorylated in vitro by non-cognate histidine kinases BarA and UhpB.

This is an uncharacterized protein from Escherichia coli (strain K12).